Reading from the N-terminus, the 478-residue chain is RNA exonuclease 3 (478 aa).

One can recognise an Exonuclease domain in the interval 320–465 (VLALDCEMAF…EDAIAAMDVI (146 aa)).

Belongs to the REXO1/REXO3 family.

The protein localises to the cytoplasm. It localises to the nucleus. In terms of biological role, 3' to 5' exoribonuclease required for proper 3' end maturation of MRP RNA and of the U5L snRNA. The protein is RNA exonuclease 3 (REX3) of Kluyveromyces lactis (strain ATCC 8585 / CBS 2359 / DSM 70799 / NBRC 1267 / NRRL Y-1140 / WM37) (Yeast).